The chain runs to 973 residues: Mediator of RNA polymerase II transcription subunit 16 (973 aa).

This sequence belongs to the Mediator complex subunit 16 family. Component of the Mediator complex.

It localises to the nucleus. Functionally, component of the Mediator complex, a coactivator involved in the regulated transcription of nearly all RNA polymerase II-dependent genes. Mediator functions as a bridge to convey information from gene-specific regulatory proteins to the basal RNA polymerase II transcription machinery. Mediator is recruited to promoters by direct interactions with regulatory proteins and serves as a scaffold for the assembly of a functional preinitiation complex with RNA polymerase II and the general transcription factors. The chain is Mediator of RNA polymerase II transcription subunit 16 (SIN4) from Candida glabrata (strain ATCC 2001 / BCRC 20586 / JCM 3761 / NBRC 0622 / NRRL Y-65 / CBS 138) (Yeast).